Reading from the N-terminus, the 452-residue chain is Pup--protein ligase (452 aa).

Glu9 is a Mg(2+) binding site. Arg53 is an ATP binding site. Position 55 (Tyr55) interacts with Mg(2+). Asp57 (proton acceptor) is an active-site residue. Residue Glu63 participates in Mg(2+) binding. ATP-binding residues include Thr66 and Trp419.

This sequence belongs to the Pup ligase/Pup deamidase family. Pup-conjugating enzyme subfamily.

It carries out the reaction ATP + [prokaryotic ubiquitin-like protein]-L-glutamate + [protein]-L-lysine = ADP + phosphate + N(6)-([prokaryotic ubiquitin-like protein]-gamma-L-glutamyl)-[protein]-L-lysine.. It functions in the pathway protein degradation; proteasomal Pup-dependent pathway. The protein operates within protein modification; protein pupylation. Functionally, catalyzes the covalent attachment of the prokaryotic ubiquitin-like protein modifier Pup to the proteasomal substrate proteins, thereby targeting them for proteasomal degradation. This tagging system is termed pupylation. The ligation reaction involves the side-chain carboxylate of the C-terminal glutamate of Pup and the side-chain amino group of a substrate lysine. The protein is Pup--protein ligase of Mycobacterium ulcerans (strain Agy99).